A 148-amino-acid chain; its full sequence is Proteasome chaperone 4 (148 aa).

The protein belongs to the PSMG4 family. As to quaternary structure, component of the 20S proteasome chaperone. Forms a heterodimer with IRC25 that binds to proteasome precursors. Interacts with POP2.

The protein localises to the cytoplasm. In terms of biological role, involved in 20S proteasome assembly, facilitating the alpha-ring formation. Involved in maintenance of telomere length. This Saccharomyces cerevisiae (strain ATCC 204508 / S288c) (Baker's yeast) protein is Proteasome chaperone 4 (POC4).